The sequence spans 377 residues: GDP-mannose 3,5-epimerase (377 aa).

Gly2 is modified (N-acetylglycine). NAD(+) is bound by residues 34-60 (GAGGFIASHIARRLKHEGHYVIASDWK), Asp58, and Asp78. Substrate is bound by residues Gly103 and 143–145 (SAC). NAD(+)-binding residues include Tyr174 and Lys178. The active-site Proton acceptor is Tyr174. Substrate-binding positions include Asn203, 216-218 (EKA), Lys225, 241-243 (QTR), Arg306, and Ser356. Ser369 bears the Phosphoserine mark.

This sequence belongs to the NAD(P)-dependent epimerase/dehydratase family. Homodimer. Interacts with chaperone Hsc70-3 protein, which may regulate epimerase activity. NAD(+) is required as a cofactor.

It catalyses the reaction GDP-alpha-D-mannose = GDP-beta-L-gulose. It carries out the reaction GDP-beta-L-gulose = GDP-beta-L-galactose. The protein operates within cofactor biosynthesis; L-ascorbate biosynthesis via GDP-alpha-D-mannose pathway; L-ascorbate from GDP-alpha-D-mannose: step 1/5. Inhibited by GDP and GDP-D-glucose. Catalyzes a reversible epimerization of GDP-D-mannose that precedes the committed step in the biosynthesis of vitamin C (L-ascorbate), resulting in the hydrolysis of the highly energetic glycosyl-pyrophosphoryl linkage. Able to catalyze 2 distinct epimerization reactions and can release both GDP-L-galactose and GDP-L-gulose from GDP-mannose. The chain is GDP-mannose 3,5-epimerase from Arabidopsis thaliana (Mouse-ear cress).